The following is a 316-amino-acid chain: Heme oxygenase 2 (316 aa).

Acidic residues predominate over residues 1 to 12 (MSAEVETSEGVD). Residues 1-29 (MSAEVETSEGVDESEKKNSGALEKENQMR) form a disordered region. N-acetylserine is present on Ser2. Phosphoserine is present on Ser2. The span at 13-27 (ESEKKNSGALEKENQ) shows a compositional bias: basic and acidic residues. His45 is a binding site for heme b. HRM repeat units follow at residues 264-269 (KCPFYA) and 281-286 (SCPFRT). Cys265 and Cys282 each carry S-nitrosocysteine.

The protein belongs to the heme oxygenase family. Post-translationally, S-nitrosylated by BLVRB.

The protein localises to the microsome. It is found in the endoplasmic reticulum. The enzyme catalyses heme b + 3 reduced [NADPH--hemoprotein reductase] + 3 O2 = biliverdin IXalpha + CO + Fe(2+) + 3 oxidized [NADPH--hemoprotein reductase] + 3 H2O + H(+). Heme oxygenase cleaves the heme ring at the alpha methene bridge to form biliverdin. Biliverdin is subsequently converted to bilirubin by biliverdin reductase. Under physiological conditions, the activity of heme oxygenase is highest in the spleen, where senescent erythrocytes are sequestrated and destroyed. Heme oxygenase 2 could be implicated in the production of carbon monoxide in brain where it could act as a neurotransmitter. This chain is Heme oxygenase 2 (HMOX2), found in Macaca fascicularis (Crab-eating macaque).